The primary structure comprises 177 residues: Ribonuclease M5 (177 aa).

Positions 5 to 99 constitute a Toprim domain; it reads KQIIIVEGKT…NKTSKKIGIA (95 aa). Positions 11, 59, and 61 each coordinate Mg(2+).

This sequence belongs to the ribonuclease M5 family. Requires Mg(2+) as cofactor.

It localises to the cytoplasm. It carries out the reaction Endonucleolytic cleavage of RNA, removing 21 and 42 nucleotides, respectively, from the 5'- and 3'-termini of a 5S-rRNA precursor.. Functionally, required for correct processing of both the 5' and 3' ends of 5S rRNA precursor. Cleaves both sides of a double-stranded region yielding mature 5S rRNA in one step. In Mycoplasma mycoides subsp. mycoides SC (strain CCUG 32753 / NCTC 10114 / PG1), this protein is Ribonuclease M5.